The following is a 417-amino-acid chain: MELDPSDSNSRVVDASQFSKYRDAGALVSKAFHQVASRCVPGASTREISSYGDNLLHEYKSSIYKSQRFEKGIAEPTSICVNNCAYNYAPGPESVIAGNDNSYHLQVGDVTKISMGLHFDGYTALISHTIVVTPPPQPGMGPYIGPGADAICAAHYASKAVANLLATNNSDDPITGSRLRKIVDDIASQFRVSVCPGSRIRRISRFLVGQPTIDRLEEDQNTKHAVEWPAPEEETRKADVTNSLDPANVLSTELNTWHVMPKEAWLIDISMSSQPISSLKEHPDLKPTLYIHDVNVSYMLKLKASRSLLSEIKKEKSVFPFHFGSLSSERNLLGLRELTDRHILVPMPVLISSPSNVIAREELTVITQPNPSSDLLCLTVPTPPSYVKSDFSLEDGTDAALICEGINVNIKSININV.

Belongs to the peptidase M24 family. In terms of assembly, component of the nucleoplasmic and cytoplasmic pre-60S ribosomal particles.

The protein resides in the cytoplasm. It localises to the nucleus. Functionally, probable metalloprotease involved in proper assembly of pre-ribosomal particles during the biogenesis of the 60S ribosomal subunit. Accompanies the pre-60S particles to the cytoplasm. This is Probable metalloprotease arx1 (arx1) from Schizosaccharomyces pombe (strain 972 / ATCC 24843) (Fission yeast).